The sequence spans 158 residues: Transcription elongation factor GreA (158 aa).

Residues 45-72 are a coiled coil; sequence AEYHAAREQQSFIEGRIKQLEGELSHAE.

It belongs to the GreA/GreB family.

Functionally, necessary for efficient RNA polymerase transcription elongation past template-encoded arresting sites. The arresting sites in DNA have the property of trapping a certain fraction of elongating RNA polymerases that pass through, resulting in locked ternary complexes. Cleavage of the nascent transcript by cleavage factors such as GreA or GreB allows the resumption of elongation from the new 3'terminus. GreA releases sequences of 2 to 3 nucleotides. In Xylella fastidiosa (strain 9a5c), this protein is Transcription elongation factor GreA.